Here is a 41-residue protein sequence, read N- to C-terminus: uncharacterized protein (41 aa).

Basic and acidic residues predominate over residues 1 to 12 (MTRNVVRQEFEA). Residues 1 to 23 (MTRNVVRQEFEAPGKPQDSSQQD) are disordered.

This is an uncharacterized protein from Homo sapiens (Human).